A 106-amino-acid chain; its full sequence is Terpredoxin (106 aa).

The 2Fe-2S ferredoxin-type domain occupies proline 2–alanine 106. 4 residues coordinate [2Fe-2S] cluster: cysteine 40, cysteine 46, cysteine 49, and cysteine 87.

The protein belongs to the adrenodoxin/putidaredoxin family. The cofactor is [2Fe-2S] cluster.

Its function is as follows. The oxidation of alpha-terpineol by cytochrome p450-TERP requires the participation of a flavoprotein, terpredoxin reductase, and an iron-sulfur protein, terpredoxin, to mediate the transfer of electrons from NADH to P450 for oxygen activation. In Pseudomonas sp, this protein is Terpredoxin (terPB).